We begin with the raw amino-acid sequence, 185 residues long: Putative manganese efflux pump MntP (185 aa).

The next 6 helical transmembrane spans lie at 4–24 (LLLS…SVSL), 43–63 (IFFG…GVPI), 67–87 (IDPF…GKMI), 107–127 (LLLA…FALI), 131–151 (VLLP…FGVL), and 165–185 (QILG…EYCL).

This sequence belongs to the MntP (TC 9.B.29) family.

The protein localises to the cell membrane. Functionally, probably functions as a manganese efflux pump. This Methanocorpusculum labreanum (strain ATCC 43576 / DSM 4855 / Z) protein is Putative manganese efflux pump MntP.